The sequence spans 369 residues: tRNA(Met) cytidine acetate ligase (369 aa).

Residues 7 to 20 (VAEF…HKYL), Gly96, Asn152, and Arg175 contribute to the ATP site.

It belongs to the TmcAL family.

Its subcellular location is the cytoplasm. The catalysed reaction is cytidine(34) in elongator tRNA(Met) + acetate + ATP = N(4)-acetylcytidine(34) in elongator tRNA(Met) + AMP + diphosphate. Functionally, catalyzes the formation of N(4)-acetylcytidine (ac(4)C) at the wobble position of elongator tRNA(Met), using acetate and ATP as substrates. First activates an acetate ion to form acetyladenylate (Ac-AMP) and then transfers the acetyl group to tRNA to form ac(4)C34. This is tRNA(Met) cytidine acetate ligase from Streptococcus agalactiae serotype Ia (strain ATCC 27591 / A909 / CDC SS700).